An 84-amino-acid polypeptide reads, in one-letter code: MATGTDQVVGFGLVAVSLIIFTYYTTWVILLPFIDSQHVIHKYFLPRAYAVLIPLATGLLLLLFVGLFITYVMLKSRRLTKKAQ.

The next 2 membrane-spanning stretches (helical) occupy residues 11 to 31 (FGLV…VILL) and 49 to 69 (YAVL…GLFI).

The protein belongs to the DPM2 family. As to quaternary structure, component of the dolichol-phosphate mannose (DPM) synthase complex composed of DPM1, DPM2 and DPM3; in the complex interacts directly with DPM3. Component of the glycosylphosphatidylinositol-N-acetylglucosaminyltransferase (GPI-GnT) complex composed at least by PIGA, PIGC, PIGH, PIGP, PIGQ, PIGY and DPM2. Interacts with PIGA, PIGC and PIGQ.

The protein resides in the endoplasmic reticulum membrane. It participates in protein modification; protein glycosylation. Regulates the biosynthesis of dolichol phosphate-mannose. Regulatory subunit of the dolichol-phosphate mannose (DPM) synthase complex; essential for the ER localization and stable expression of DPM1. Part of the glycosylphosphatidylinositol-N-acetylglucosaminyltransferase (GPI-GnT) complex that catalyzes the transfer of N-acetylglucosamine from UDP-N-acetylglucosamine to phosphatidylinositol and participates in the first step of GPI biosynthesis. May act by regulating the GPI-GNT complex. This is Dolichol phosphate-mannose biosynthesis regulatory protein from Cricetulus griseus (Chinese hamster).